The following is a 77-amino-acid chain: UPF0349 protein lwe2340 (77 aa).

Belongs to the UPF0349 family.

The sequence is that of UPF0349 protein lwe2340 from Listeria welshimeri serovar 6b (strain ATCC 35897 / DSM 20650 / CCUG 15529 / CIP 8149 / NCTC 11857 / SLCC 5334 / V8).